The primary structure comprises 34 residues: Photosystem II reaction center protein M (34 aa).

A helical transmembrane segment spans residues 7–27 (GFVASLLFILVPAIFLIVLYI).

It belongs to the PsbM family. As to quaternary structure, PSII is composed of 1 copy each of membrane proteins PsbA, PsbB, PsbC, PsbD, PsbE, PsbF, PsbH, PsbI, PsbJ, PsbK, PsbL, PsbM, PsbT, PsbX, PsbY, PsbZ, Psb30/Ycf12, peripheral proteins PsbO, CyanoQ (PsbQ), PsbU, PsbV and a large number of cofactors. It forms dimeric complexes.

The protein resides in the cellular thylakoid membrane. Functionally, one of the components of the core complex of photosystem II (PSII). PSII is a light-driven water:plastoquinone oxidoreductase that uses light energy to abstract electrons from H(2)O, generating O(2) and a proton gradient subsequently used for ATP formation. It consists of a core antenna complex that captures photons, and an electron transfer chain that converts photonic excitation into a charge separation. This subunit is found at the monomer-monomer interface. The chain is Photosystem II reaction center protein M from Parasynechococcus marenigrum (strain WH8102).